A 557-amino-acid polypeptide reads, in one-letter code: 2-succinyl-5-enolpyruvyl-6-hydroxy-3-cyclohexene-1-carboxylate synthase (557 aa).

Positions Y183 to P206 are disordered.

Belongs to the TPP enzyme family. MenD subfamily. Homodimer. Mg(2+) serves as cofactor. Requires Mn(2+) as cofactor. It depends on thiamine diphosphate as a cofactor.

It carries out the reaction isochorismate + 2-oxoglutarate + H(+) = 5-enolpyruvoyl-6-hydroxy-2-succinyl-cyclohex-3-ene-1-carboxylate + CO2. Its pathway is quinol/quinone metabolism; 1,4-dihydroxy-2-naphthoate biosynthesis; 1,4-dihydroxy-2-naphthoate from chorismate: step 2/7. It participates in quinol/quinone metabolism; menaquinone biosynthesis. In terms of biological role, catalyzes the thiamine diphosphate-dependent decarboxylation of 2-oxoglutarate and the subsequent addition of the resulting succinic semialdehyde-thiamine pyrophosphate anion to isochorismate to yield 2-succinyl-5-enolpyruvyl-6-hydroxy-3-cyclohexene-1-carboxylate (SEPHCHC). The polypeptide is 2-succinyl-5-enolpyruvyl-6-hydroxy-3-cyclohexene-1-carboxylate synthase (Halorhodospira halophila (strain DSM 244 / SL1) (Ectothiorhodospira halophila (strain DSM 244 / SL1))).